Here is a 689-residue protein sequence, read N- to C-terminus: Transcription factor BHLH42 (689 aa).

Disordered regions lie at residues 192 to 287 and 458 to 489; these read IDHH…NPRV and DDNN…ANHV. Positions 206–217 are enriched in polar residues; the sequence is EHSTSNLATSSV. Over residues 246-271 the composition is skewed to acidic residues; the sequence is EEQEQEQEEDEDDDDDDDDEEEAESD. The basic motif stretch occupies residues 483 to 496; it reads ELSANHVLAERRRR. Residues 483 to 532 form the bHLH domain; it reads ELSANHVLAERRRREKLNERFIILRSLVPFVTKMDKASILGDTIEYVKQL. The segment at 497-532 is helix-loop-helix motif; the sequence is EKLNERFIILRSLVPFVTKMDKASILGDTIEYVKQL. Residues 547–570 form a disordered region; the sequence is EIDQRSRSSGDPQRSGAKAATDKR.

This sequence belongs to the bHLH protein family. Interacts with MYB123. As to expression, expressed in the inner pericarp of maturing fruits.

The protein resides in the nucleus. Functionally, transcription activator involved in the spatiotemporal regulation of anthocyanin biosynthesis specifically in the inner pericarp of red-fleshed kiwifruits. Functions in association with MYB123 to activate the promoters of LDOX (ANS) and F3GT1 that encode the dedicated enzymes for anthocyanin biosynthesis. The protein is Transcription factor BHLH42 of Actinidia chinensis var. chinensis (Chinese soft-hair kiwi).